We begin with the raw amino-acid sequence, 287 residues long: Cell wall protein PIR5 (287 aa).

The N-terminal stretch at 1 to 21 (MHYKKAFLASLLSSIALTAYA) is a signal peptide. A propeptide spanning residues 22–62 (PPEPWATLTPSSKMDGGTTEYRTSFGLAVIPFTVTESKVKR) is cleaved from the precursor. 4 PIR1/2/3 repeats span residues 62–80 (RNVISQINDGQVQVTTQKL), 81–99 (PHPVSQIGDGQIQVTTQKV), 104–122 (SHIVSQIGDGQLQITTAKN), and 144–162 (ATAVSQIHDGQVQVTISSA).

The protein belongs to the PIR protein family. In terms of processing, covalently linked to beta-1,3-glucan of the inner cell wall layer via an alkali-sensitive ester linkage between the gamma-carboxyl group of glutamic acids, arising from specific glutamines within the PIR1/2/3 repeats, and hydroxyl groups of glucoses of beta-1,3-glucan chains.

It is found in the secreted. It localises to the cell wall. Its function is as follows. Component of the outer cell wall layer. May be involved in meiosis and sporulation. The protein is Cell wall protein PIR5 (PIR5) of Saccharomyces cerevisiae (strain YJM789) (Baker's yeast).